The following is a 121-amino-acid chain: Structural protein p14.5 (121 aa).

2 disordered regions span residues 1 to 24 (MADFNSPIQYLKEDSRDRTSIGSL) and 84 to 121 (TSLVPEETDNKPEDDEESGAKPKKKKHLFPKLSSHKSK). Ala-2 is subject to N-acetylalanine; by host. Residues 104 to 121 (KPKKKKHLFPKLSSHKSK) are compositionally biased toward basic residues.

The protein belongs to the asfivirus structural protein p14.5 family. As to quaternary structure, interacts with the major capsid protein. Interacts with host IRF3; this interaction interferes with the recruitment of IRF3 to TBK1. In terms of processing, acetylated.

The protein resides in the virion. In terms of biological role, structural protein required for transport of intracellular particles from the assembly sites to the plasma membrane. Binds to both ssDNA and dsDNA. Suppressed the activation of the cGAS/STING pathway by interfering with the recruitment of IRF3 to TBK1, which in turn suppresses IRF3 phosphorylation, decreasing interferon production. This is Structural protein p14.5 from Ornithodoros (relapsing fever ticks).